The sequence spans 125 residues: Aspartate 1-decarboxylase (125 aa).

Serine 25 acts as the Schiff-base intermediate with substrate; via pyruvic acid in catalysis. At serine 25 the chain carries Pyruvic acid (Ser). Threonine 57 is a substrate binding site. Residue tyrosine 58 is the Proton donor of the active site. Residue 73-75 (GAA) coordinates substrate.

Belongs to the PanD family. In terms of assembly, heterooctamer of four alpha and four beta subunits. Pyruvate serves as cofactor. Is synthesized initially as an inactive proenzyme, which is activated by self-cleavage at a specific serine bond to produce a beta-subunit with a hydroxyl group at its C-terminus and an alpha-subunit with a pyruvoyl group at its N-terminus.

Its subcellular location is the cytoplasm. It catalyses the reaction L-aspartate + H(+) = beta-alanine + CO2. The protein operates within cofactor biosynthesis; (R)-pantothenate biosynthesis; beta-alanine from L-aspartate: step 1/1. Catalyzes the pyruvoyl-dependent decarboxylation of aspartate to produce beta-alanine. This is Aspartate 1-decarboxylase from Herpetosiphon aurantiacus (strain ATCC 23779 / DSM 785 / 114-95).